Here is a 338-residue protein sequence, read N- to C-terminus: POU domain, class 4, transcription factor 3 (338 aa).

Residues 56–65 (RAEALAAVDI) carry the POU-IV box motif. The region spanning 179 to 256 (DVESDPRELE…VLQAWLEEAE (78 aa)) is the POU-specific domain. The segment at residues 274–333 (RKRKRTSIAAPEKRSLEAYFAIQPRPSSEKIAAIAEKLDLKKNVVRVWFCNQRQKQKRMK) is a DNA-binding region (homeobox).

It belongs to the POU transcription factor family. Class-4 subfamily. In terms of assembly, interacts with ISL1. As to expression, brain.

It localises to the nucleus. The protein resides in the cytoplasm. Acts as a transcriptional activator. Acts by binding to sequences related to the consensus octamer motif 5'-ATGCAAAT-3' in the regulatory regions of its target genes. Involved in the auditory system development, required for terminal differentiation of hair cells in the inner ear. The polypeptide is POU domain, class 4, transcription factor 3 (Mus musculus (Mouse)).